The sequence spans 256 residues: MALPDFSMRQLLEAGVHFGHQTHRWNPKMAPYIYGDRNNIHILDLSQTVPLLHNALKIVSDTVARGGRVLFVGTKRQASDIIADAANRSAQYYVNARWLGGMMTNWKTISNSIQRLRKLDELLAGEAQGFTKKERLNLEREREKLDRALGGIKDMGSVPDLMFIIDTNKEAIAIQEAKRLGIPVVAVIDSNCDPDQIDYPIPGNDDAARAIALYCDLIARAALDGIARQQGAMGIDVGAQAEAPVEPALEAPAEGA.

This sequence belongs to the universal ribosomal protein uS2 family.

This Brucella anthropi (strain ATCC 49188 / DSM 6882 / CCUG 24695 / JCM 21032 / LMG 3331 / NBRC 15819 / NCTC 12168 / Alc 37) (Ochrobactrum anthropi) protein is Small ribosomal subunit protein uS2.